The following is a 375-amino-acid chain: Alcohol dehydrogenase 1 (375 aa).

Ser-2 carries the N-acetylserine modification. Residues Cys-47, His-68, Cys-98, Cys-101, Cys-104, Cys-112, and Cys-175 each coordinate Zn(2+). Residues 200 to 205 (GLGGVG), Asp-224, and Lys-229 contribute to the NAD(+) site. Lys-234 carries the post-translational modification N6-succinyllysine. Position 293 to 295 (293 to 295 (VGV)) interacts with NAD(+). Residue Lys-340 is modified to N6-succinyllysine. Arg-370 lines the NAD(+) pocket.

Belongs to the zinc-containing alcohol dehydrogenase family. Class-I subfamily. It depends on Zn(2+) as a cofactor.

Its subcellular location is the cytoplasm. The catalysed reaction is a primary alcohol + NAD(+) = an aldehyde + NADH + H(+). It carries out the reaction a secondary alcohol + NAD(+) = a ketone + NADH + H(+). The chain is Alcohol dehydrogenase 1 (ADH1) from Peromyscus maniculatus (North American deer mouse).